The following is a 457-amino-acid chain: Serine--tRNA ligase (457 aa).

252 to 254 (TAE) is an L-serine binding site. ATP contacts are provided by residues 283–285 (RKE) and Val299. An L-serine-binding site is contributed by Glu306. 370–373 (EMVS) is a binding site for ATP. Position 406 (Thr406) interacts with L-serine.

The protein belongs to the class-II aminoacyl-tRNA synthetase family. Type-1 seryl-tRNA synthetase subfamily. In terms of assembly, homodimer. The tRNA molecule binds across the dimer.

It is found in the cytoplasm. The catalysed reaction is tRNA(Ser) + L-serine + ATP = L-seryl-tRNA(Ser) + AMP + diphosphate + H(+). It carries out the reaction tRNA(Sec) + L-serine + ATP = L-seryl-tRNA(Sec) + AMP + diphosphate + H(+). Its pathway is aminoacyl-tRNA biosynthesis; selenocysteinyl-tRNA(Sec) biosynthesis; L-seryl-tRNA(Sec) from L-serine and tRNA(Sec): step 1/1. Catalyzes the attachment of serine to tRNA(Ser). Is also able to aminoacylate tRNA(Sec) with serine, to form the misacylated tRNA L-seryl-tRNA(Sec), which will be further converted into selenocysteinyl-tRNA(Sec). In Saccharolobus islandicus (strain M.14.25 / Kamchatka #1) (Sulfolobus islandicus), this protein is Serine--tRNA ligase.